A 216-amino-acid chain; its full sequence is MNKINIAIDGPAAAGKSTIAKRVAEALSMIYVDTGAMYRAITLAHLEQPETEIDKLVDHIDLKLVNRSGQRIYLNGSDVSDRIREHDVTLNVSRIASIESVRTKLVNLQQNMTANKGVVMDGRDIGTKVIPEAELKVYMVASVEERAERRLIDNRNRGIASTFEELKRDIERRDHLDMTREISPLTKAEDAIEIDTTGKSIEEVTAQIIELAKSAM.

Glycine 10 to threonine 18 lines the ATP pocket.

This sequence belongs to the cytidylate kinase family. Type 1 subfamily.

Its subcellular location is the cytoplasm. It carries out the reaction CMP + ATP = CDP + ADP. It catalyses the reaction dCMP + ATP = dCDP + ADP. This is Cytidylate kinase from Macrococcus caseolyticus (strain JCSC5402) (Macrococcoides caseolyticum).